Reading from the N-terminus, the 185-residue chain is Elongation factor P (185 aa).

It belongs to the elongation factor P family.

It localises to the cytoplasm. Its pathway is protein biosynthesis; polypeptide chain elongation. In terms of biological role, involved in peptide bond synthesis. Stimulates efficient translation and peptide-bond synthesis on native or reconstituted 70S ribosomes in vitro. Probably functions indirectly by altering the affinity of the ribosome for aminoacyl-tRNA, thus increasing their reactivity as acceptors for peptidyl transferase. The chain is Elongation factor P from Bacillus cereus (strain 03BB102).